A 42-amino-acid chain; its full sequence is Photosystem I reaction center subunit IX (42 aa).

The chain crosses the membrane as a helical span at residues 7-27 (YLSAAPVLSTLWLGALAALLI).

The protein belongs to the PsaJ family.

The protein resides in the plastid membrane. May help in the organization of the PsaE and PsaF subunits. In Cuscuta reflexa (Southern Asian dodder), this protein is Photosystem I reaction center subunit IX.